A 57-amino-acid chain; its full sequence is Large ribosomal subunit protein bL32 (57 aa).

Residues 1–19 (MATPKRRMSRANTRSRRSQ) show a composition bias toward basic residues. A disordered region spans residues 1–21 (MATPKRRMSRANTRSRRSQWK).

This sequence belongs to the bacterial ribosomal protein bL32 family.

This Mycobacterium ulcerans (strain Agy99) protein is Large ribosomal subunit protein bL32.